The chain runs to 662 residues: ATP-dependent RNA helicase DDX3X (662 aa).

Ser2 carries the N-acetylserine modification. The interval 2-139 (SHVAVENALG…KSDEDDWSKP (138 aa)) is required for TBK1 and IKBKE-dependent IFNB1 activation. Positions 12 to 21 (LDQQFAGLDL) match the Nuclear export signal motif. Residues 19-144 (LDLNSSDNQS…DWSKPLPPSE (126 aa)) are disordered. Polar residues predominate over residues 21 to 34 (LNSSDNQSGGSTAS). Residues 38–44 (YIPPHLR) form an interaction with EIF4E region. The segment covering 44–68 (RNREATKGFYDKDSSGWSSSKDKDA) has biased composition (basic and acidic residues). N6-acetyllysine is present on Lys55. Ser82 and Ser90 each carry phosphoserine. Positions 94–130 (GRFDDRGRGDYDGIGGRGDRSGFGKFERGGNSRWCDK) are enriched in basic and acidic residues. Residues 100-110 (GRGDYDGIGGR) form an interaction with IKBKE region. Residues 100–662 (GRGDYDGIGG…NSQGVDWWGN (563 aa)) are interaction with GSK3B. Residue Arg101 is modified to Omega-N-methylarginine. Tyr104 is subject to Phosphotyrosine. Arg110 bears the Omega-N-methylarginine mark. The residue at position 118 (Lys118) is an N6-acetyllysine. Ser131 carries the phosphoserine modification. The interval 139-172 (PLPPSERLEQELFSGGNTGINFEKYDDIPVEATG) is interaction with CHUK. The Q motif motif lies at 180–208 (ESFSDVEMGEIIMGNIELTRYTRPTPVQK). Position 183 is a phosphoserine (Ser183). 200–207 (YTRPTPVQ) contacts ATP. The region spanning 211-403 (IPIIKEKRDL…RDFLDEYIFL (193 aa)) is the Helicase ATP-binding domain. A Glycyl lysine isopeptide (Lys-Gly) (interchain with G-Cter in SUMO2) cross-link involves residue Lys215. 224–231 (AQTGSGKT) provides a ligand contact to ATP. The tract at residues 250–259 (ALRAMKENGR) is involved in stimulation of ATPase activity by DNA and RNA, nucleic acid binding and unwinding. The DEAD box signature appears at 347–350 (DEAD). Residues 414–575 (NITQKVVWVE…EVPSWLENMA (162 aa)) form the Helicase C-terminal domain. A Phosphoserine modification is found at Ser456. Residues 536 to 661 (GNLGLATSFF…YNSQGVDWWG (126 aa)) are interaction with NXF1. Arg592 is modified (omega-N-methylarginine). Residues Ser594, Ser605, and Ser612 each carry the phosphoserine modification. Positions 601-633 (DYRQSSGASSSSFSSSRASSSRSGGGGHGGSRG) are disordered. Over residues 604 to 622 (QSSGASSSSFSSSRASSSR) the composition is skewed to low complexity. Omega-N-methylarginine occurs at positions 617 and 632. The segment covering 623–633 (SGGGGHGGSRG) has biased composition (gly residues).

Belongs to the DEAD box helicase family. DDX3/DED1 subfamily. In terms of assembly, homodimer; can bind RNA as a monomer and as a dimer/oligomer. Interacts with TDRD3. When phosphorylated, interacts with IRF3; the interaction facilitates the phosphorylation and activation of IRF3 by IKBKE. Directly interacts with XPO1/CRM1. The interaction with XPO1/CMR1 is dependent on the DDX3X nuclear export signal motif and XPO1 interaction with GTPase RAN in its active GTP-bound form. Weakly interacts with TBKBP1/SINTBAD. Directly interacts with TRAF3; this interaction stimulates TRAF3 'Lys-63' ubiquitination. Interacts with CSNK1E in a Wnt-dependent manner; this interaction greatly enhances CSNK1E affinity for ATP, stimulates its kinase activity and promotes CSNK1E-mediated DVL2 phosphorylation. In the presence of RNA, the interaction is decreased. Also interacts with CSNK1D and stimulates its kinase activity. Interacts with TRPV4; this interaction is decreased when the TRPV4 channel is activated, leading to DDX3X relocalization to the nucleus. Interacts with MAP3K14/NIK. Directly interacts with CHUK/IKKA after physiological activation of the TLR7 and TLR8 pathways; this interaction enhances CHUK autophosphorylation. May associate with EIF4F complex, composed of at least EIF4A, EIF4E and EIF4G1/EIF4G3. Directly interacts with EIF4E in an RNA-independent manner; this interaction enhances EIF4E cap-binding ability. Directly interacts with EIF4G1 in an RNA-independent manner. DDX3X competes with EIF4G1 for interaction with EIF4E. Interacts with EIF4A1 and EIF2S1 in an RNA-independent manner. Associates with the eukaryotic translation initiation factor 3 (eIF-3) complex, including with EIF3B and EIF3C subunits. Directly interacts with IKBKE/IKKE; this interaction stimulates IKBKE activating autophosphorylation and is induced upon viral infection. Interacts with TBK1. Interacts with SP1; this interaction potentiates SP1-induced CDKN1A/WAF1/CIP1 transcription. Interacts with GSK3A and GSK3B. Interacts with several death receptors, inclusing FAS, TNFRSF10A and TNFRSF10B. Recruited to TNFRSF10B in the absence of receptor stimulation. When TNFRSF10B is stimulated, further recruited to the receptor and cleaved by caspases. A large proteolytic fragment remains associated with TNFRSF10B. Interacts (via C-terminus) with NXF1/TAP; this interaction may be partly involved in DDX3X nuclear export and in NXF1 localization to stress granules. Identified in an mRNP complex, composed of at least DHX9, DDX3X, ELAVL1, HNRNPU, IGF2BP1/2, ILF3, PABPC1, PCBP2, PTBP2, STAU1, STAU2, SYNCRIP and YBX1. The interaction with IGF2BP1/2 is RNA-dependent. Directly interacts with PABPC1/PABP1 in an RNA-independent manner. This interaction increases in stressed cells and decreases during cell recovery. Interacts (via C-terminus) with MAVS/IPS-1; this interaction potentiates MAVS-mediated IFNB induction. Interacts with ERCC6/CBS. Interacts with DHX33 in an RNA-independent manner. Interacts with DDX5 in the cytoplasm; this interaction may be more efficient when both proteins are unphosphorylated. Interacts with RIGI. Interacts with IFIH1/MDA5. Interacts with NCAPH; this interaction may be important for the NCAPH localization at condensing chromosomes during mitosis. Interacts with NLRP3 (via NACHT domain) under inflammasome-activating conditions. Interacts with CAPRIN1. Interacts with HNF4A and NR0B2/SHP in an RNA-independent manner; this interaction disrupts the interaction between HNF4 and NR0B2 that forms inactive heterodimers and enhances the formation of active HNF4 homodimers. Interacts with CREBBP/CBP. Interacts with EP300/p300. Interacts with gamma-tubulin. Interacts with phosphorylated TP53. Directly interacts with RELA/p65; this interaction may trap RELA in the cytoplasm, impairing nuclear relocalization upon TNF activating signals. In terms of processing, phosphorylated by TBK1; the phosphorylation is required for the synergistic induction of IFNB mediated by TBK1 and DDX3X. Phosphorylated by IKBKE. Also phosphorylated by CSNK1E; this phosphorylation may inhibit RNA-stimulated ATPase activity. Upon stimulation of death receptors, including TNFRSF10B, recruited to receptors and cleaved by caspases. Proteolytic fragments remain associated with the receptors. This cleavage presumably inactivates DDX3X anti-apoptotic function. Post-translationally, ubiquitinated by RNF39 via 'Lys-48'-linked ubiquitination; leading to proteasomal degradation. As to expression, expressed in ovary, including in germinal vesicle immature and metaphase II (MII) stage oocytes (at protein level). In the brain, expressed in the granule cells of the cerebellum and dentate gyrus, the pyramidal cells of the hippocampus, the ependymal cells lining the ventricles, choroid plexi and olfactory bulb. Also accumulates in the thalamic nuclei, the dorsal region of the colliculi and the pontine nucleus.

The protein localises to the cell membrane. It localises to the nucleus. It is found in the cytoplasm. Its subcellular location is the stress granule. The protein resides in the inflammasome. The protein localises to the cell projection. It localises to the lamellipodium. The catalysed reaction is ATP + H2O = ADP + phosphate + H(+). Multifunctional ATP-dependent RNA helicase. The ATPase activity can be stimulated by various ribo-and deoxynucleic acids indicative for a relaxed substrate specificity. In vitro can unwind partially double-stranded DNA with a preference for 5'-single-stranded DNA overhangs. Binds RNA G-quadruplex (rG4s) structures, including those located in the 5'-UTR of NRAS mRNA. Involved in many cellular processes, which do not necessarily require its ATPase/helicase catalytic activities. Involved in transcription regulation. Positively regulates CDKN1A/WAF1/CIP1 transcription in an SP1-dependent manner, hence inhibits cell growth. This function requires its ATPase, but not helicase activity. CDKN1A up-regulation may be cell-type specific. Binds CDH1/E-cadherin promoter and represses its transcription. Potentiates HNF4A-mediated MTTP transcriptional activation; this function requires ATPase, but not helicase activity. Facilitates HNF4A acetylation, possibly catalyzed by CREBBP/EP300, thereby increasing the DNA-binding affinity of HNF4 to its response element. In addition, disrupts the interaction between HNF4 and SHP that forms inactive heterodimers and enhances the formation of active HNF4 homodimers. By promoting HNF4A-induced MTTP expression, may play a role in lipid homeostasis. May positively regulate TP53 transcription. Associates with mRNPs, predominantly with spliced mRNAs carrying an exon junction complex (EJC). Involved in the regulation of translation initiation. Not involved in the general process of translation, but promotes efficient translation of selected complex mRNAs, containing highly structured 5'-untranslated regions (UTR). This function depends on helicase activity. Might facilitate translation by resolving secondary structures of 5'-UTRs during ribosome scanning. Alternatively, may act prior to 43S ribosomal scanning and promote 43S pre-initiation complex entry to mRNAs exhibiting specific RNA motifs, by performing local remodeling of transcript structures located close to the cap moiety. Independently of its ATPase activity, promotes the assembly of functional 80S ribosomes and disassembles from ribosomes prior to the translation elongation process. Positively regulates the translation of cyclin E1/CCNE1 mRNA and consequently promotes G1/S-phase transition during the cell cycle. May activate TP53 translation. Required for endoplasmic reticulum stress-induced ATF4 mRNA translation. Independently of its ATPase/helicase activity, enhances IRES-mediated translation; this activity requires interaction with EIF4E. Independently of its ATPase/helicase activity, has also been shown specifically repress cap-dependent translation, possibly by acting on translation initiation factor EIF4E. Involved in innate immunity, acting as a viral RNA sensor. Binds viral RNAs and promotes the production of type I interferon (IFN-alpha and IFN-beta). Potentiate MAVS/RIGI-mediated induction of IFNB in early stages of infection. Enhances IFNB1 expression via IRF3/IRF7 pathway and participates in NFKB activation in the presence of MAVS and TBK1. Involved in TBK1 and IKBKE-dependent IRF3 activation leading to IFNB induction, acts as a scaffolding adapter that links IKBKE and IRF3 and coordinates their activation. Involved in the TLR7/TLR8 signaling pathway leading to type I interferon induction, including IFNA4 production. In this context, acts as an upstream regulator of IRF7 activation by MAP3K14/NIK and CHUK/IKKA. Stimulates CHUK autophosphorylation and activation following physiological activation of the TLR7 and TLR8 pathways, leading to MAP3K14/CHUK-mediated activatory phosphorylation of IRF7. Also stimulates MAP3K14/CHUK-dependent NF-kappa-B signaling. Negatively regulates TNF-induced IL6 and IL8 expression, via the NF-kappa-B pathway. May act by interacting with RELA/p65 and trapping it in the cytoplasm. May also bind IFNB promoter; the function is independent of IRF3. Involved in both stress and inflammatory responses. Independently of its ATPase/helicase activity, required for efficient stress granule assembly through its interaction with EIF4E, hence promotes survival in stressed cells. Independently of its helicase activity, regulates NLRP3 inflammasome assembly through interaction with NLRP3 and hence promotes cell death by pyroptosis during inflammation. This function is independent of helicase activity. Therefore DDX3X availability may be used to interpret stress signals and choose between pro-survival stress granules and pyroptotic NLRP3 inflammasomes and serve as a live-or-die checkpoint in stressed cells. In association with GSK3A/B, negatively regulates extrinsic apoptotic signaling pathway via death domain receptors, including TNFRSF10B, slowing down the rate of CASP3 activation following death receptor stimulation. Cleavage by caspases may inactivate DDX3X and relieve the inhibition. Independently of its ATPase/helicase activity, allosteric activator of CSNK1E. Stimulates CSNK1E-mediated phosphorylation of DVL2, thereby involved in the positive regulation of Wnt/beta-catenin signaling pathway. Also activates CSNK1A1 and CSNK1D in vitro, but it is uncertain if these targets are physiologically relevant. ATPase and casein kinase-activating functions are mutually exclusive. May be involved in mitotic chromosome segregation. The protein is ATP-dependent RNA helicase DDX3X (Ddx3x) of Mus musculus (Mouse).